Consider the following 91-residue polypeptide: Small ribosomal subunit protein bS20 (91 aa).

A compositionally biased stretch (basic and acidic residues) spans 1–21; it reads MPLHKSAEKRLRQSARRNERN. 2 disordered regions span residues 1-25 and 71-91; these read MPLH…RARK and NKAS…AQKD.

Belongs to the bacterial ribosomal protein bS20 family.

Functionally, binds directly to 16S ribosomal RNA. This is Small ribosomal subunit protein bS20 from Prosthecochloris aestuarii (strain DSM 271 / SK 413).